A 134-amino-acid polypeptide reads, in one-letter code: ATP synthase epsilon chain (134 aa).

The protein belongs to the ATPase epsilon chain family. In terms of assembly, F-type ATPases have 2 components, CF(1) - the catalytic core - and CF(0) - the membrane proton channel. CF(1) has five subunits: alpha(3), beta(3), gamma(1), delta(1), epsilon(1). CF(0) has three main subunits: a, b and c.

The protein resides in the cell membrane. Produces ATP from ADP in the presence of a proton gradient across the membrane. The polypeptide is ATP synthase epsilon chain (Alkaliphilus metalliredigens (strain QYMF)).